Consider the following 890-residue polypeptide: Bacteriocin BCN5 (890 aa).

2 SH3b domains span residues 22-84 (PPNA…TNAT) and 179-241 (ENNA…TNAT). Positions 303–549 (GYVKYEGAAA…RYLQKIINAV (247 aa)) constitute a Peptidase M14 domain. Residues His-358, Glu-361, and His-475 each contribute to the Zn(2+) site. Glu-525 (proton donor/acceptor) is an active-site residue. Residues 572 to 636 (EATGEVINVQ…VNSGYIIILK (65 aa)) form the SH3b 3 domain. The hydrophobic stretch occupies residues 815–869 (KALAAAVIVNGVETMFCAFLGGFIAQCIAPEFPIVAAVAGAIVSAIAAFAIGYFV).

Zn(2+) serves as cofactor.

Functionally, may function as an ionophore. The chain is Bacteriocin BCN5 (bcn) from Clostridium perfringens.